Consider the following 90-residue polypeptide: Large ribosomal subunit protein bL27 (90 aa).

Residues 1–20 (MAHKKAGGSSRNGRDSAGKR) form a disordered region.

The protein belongs to the bacterial ribosomal protein bL27 family.

In Rhodopseudomonas palustris (strain BisB18), this protein is Large ribosomal subunit protein bL27.